Here is a 255-residue protein sequence, read N- to C-terminus: Hemin import ATP-binding protein HmuV (255 aa).

The region spanning 2–238 (LRAHNLHIRR…ESLKAVFGLE (237 aa)) is the ABC transporter domain. 34 to 41 (GPNGAGKS) is a binding site for ATP.

The protein belongs to the ABC transporter superfamily. Heme (hemin) importer (TC 3.A.1.14.5) family. The complex is composed of two ATP-binding proteins (HmuV), two transmembrane proteins (HmuU) and a solute-binding protein (HmuT).

It is found in the cell inner membrane. Part of the ABC transporter complex HmuTUV involved in hemin import. Responsible for energy coupling to the transport system. In Pseudomonas fluorescens (strain Pf0-1), this protein is Hemin import ATP-binding protein HmuV.